A 496-amino-acid polypeptide reads, in one-letter code: Aspartyl/glutamyl-tRNA(Asn/Gln) amidotransferase subunit B (496 aa).

Residues 475-496 form a disordered region; the sequence is TGGSADPSKVNTLLREQLEDKK.

The protein belongs to the GatB/GatE family. GatB subfamily. In terms of assembly, heterotrimer of A, B and C subunits.

It carries out the reaction L-glutamyl-tRNA(Gln) + L-glutamine + ATP + H2O = L-glutaminyl-tRNA(Gln) + L-glutamate + ADP + phosphate + H(+). The enzyme catalyses L-aspartyl-tRNA(Asn) + L-glutamine + ATP + H2O = L-asparaginyl-tRNA(Asn) + L-glutamate + ADP + phosphate + 2 H(+). Allows the formation of correctly charged Asn-tRNA(Asn) or Gln-tRNA(Gln) through the transamidation of misacylated Asp-tRNA(Asn) or Glu-tRNA(Gln) in organisms which lack either or both of asparaginyl-tRNA or glutaminyl-tRNA synthetases. The reaction takes place in the presence of glutamine and ATP through an activated phospho-Asp-tRNA(Asn) or phospho-Glu-tRNA(Gln). In Haloquadratum walsbyi (strain DSM 16790 / HBSQ001), this protein is Aspartyl/glutamyl-tRNA(Asn/Gln) amidotransferase subunit B.